Here is a 173-residue protein sequence, read N- to C-terminus: Protein GrpE (173 aa).

It belongs to the GrpE family. Homodimer.

Its subcellular location is the cytoplasm. Its function is as follows. Participates actively in the response to hyperosmotic and heat shock by preventing the aggregation of stress-denatured proteins, in association with DnaK and GrpE. It is the nucleotide exchange factor for DnaK and may function as a thermosensor. Unfolded proteins bind initially to DnaJ; upon interaction with the DnaJ-bound protein, DnaK hydrolyzes its bound ATP, resulting in the formation of a stable complex. GrpE releases ADP from DnaK; ATP binding to DnaK triggers the release of the substrate protein, thus completing the reaction cycle. Several rounds of ATP-dependent interactions between DnaJ, DnaK and GrpE are required for fully efficient folding. This chain is Protein GrpE, found in Campylobacter fetus subsp. fetus (strain 82-40).